The sequence spans 121 residues: Alpha-endosulfine (121 aa).

Positions 1–53 are disordered; the sequence is MSQKQEEENPAEETGEEKQDTQEKEGILPEKAEEAKLKAKYPSLGQKPGGSDF. Ser-2 is subject to N-acetylserine. Ser-2 carries the phosphoserine modification. Basic and acidic residues predominate over residues 16 to 37; the sequence is EEKQDTQEKEGILPEKAEEAKL. Thr-21 carries the phosphothreonine modification. Ser-43 carries the phosphoserine modification. Phosphoserine; by GWL is present on Ser-67. The interval 79 to 121 is disordered; the sequence is NKQLPSAGPDKNLVTGDHIPTPQDLPQRKSSLVTSKLAGGQVE. Ser-109 carries the post-translational modification Phosphoserine; by PKA.

The protein belongs to the endosulfine family. Interacts (when phosphorylated at Ser-67) with PPP2R2D. Interacts with ABCC8. Interacts with SNCA; interaction is disrupted when phosphorylated at Ser-109. Phosphorylation at Ser-67 by GWL during mitosis is essential for interaction with PPP2R2D (PR55-delta) and subsequent inactivation of PP2A. Phosphorylated by PKA.

It is found in the cytoplasm. In terms of biological role, protein phosphatase inhibitor that specifically inhibits protein phosphatase 2A (PP2A) during mitosis. When phosphorylated at Ser-67 during mitosis, specifically interacts with PPP2R2D (PR55-delta) and inhibits its activity, leading to inactivation of PP2A, an essential condition to keep cyclin-B1-CDK1 activity high during M phase. Also acts as a stimulator of insulin secretion by interacting with sulfonylurea receptor (ABCC8), thereby preventing sulfonylurea from binding to its receptor and reducing K(ATP) channel currents. This is Alpha-endosulfine (ENSA) from Bos taurus (Bovine).